Reading from the N-terminus, the 449-residue chain is 4-aminobutyrate aminotransferase (449 aa).

Lys-294 is subject to N6-(pyridoxal phosphate)lysine.

Belongs to the class-III pyridoxal-phosphate-dependent aminotransferase family. Pyridoxal 5'-phosphate serves as cofactor.

It catalyses the reaction 4-aminobutanoate + 2-oxoglutarate = succinate semialdehyde + L-glutamate. The catalysed reaction is (S)-3-amino-2-methylpropanoate + 2-oxoglutarate = 2-methyl-3-oxopropanoate + L-glutamate. It participates in amino-acid degradation; 4-aminobutanoate degradation. The protein is 4-aminobutyrate aminotransferase (gabT) of Mycobacterium bovis (strain ATCC BAA-935 / AF2122/97).